The following is a 466-amino-acid chain: Glycine--tRNA ligase (466 aa).

Residues arginine 104 and glutamate 178 each coordinate substrate. Residues 210–212, 220–225, 294–295, and 338–341 contribute to the ATP site; these read RNE, FRTREF, EL, and GADR. Residue 225 to 229 participates in substrate binding; it reads FEQME. 334-338 lines the substrate pocket; it reads EPSLG.

Belongs to the class-II aminoacyl-tRNA synthetase family. As to quaternary structure, homodimer.

The protein resides in the cytoplasm. It carries out the reaction tRNA(Gly) + glycine + ATP = glycyl-tRNA(Gly) + AMP + diphosphate. Functionally, catalyzes the attachment of glycine to tRNA(Gly). This chain is Glycine--tRNA ligase, found in Geobacillus thermodenitrificans (strain NG80-2).